We begin with the raw amino-acid sequence, 453 residues long: Alpha-2B adrenergic receptor (453 aa).

The Extracellular portion of the chain corresponds to 1 to 17 (MSGPAMVHQEPYSVQAT). Residues 18-42 (AAIASAITFLILFTIFGNALVILAV) form a helical membrane-spanning segment. The Cytoplasmic segment spans residues 43-54 (LTSRSLRAPQNL). The helical transmembrane segment at 55–80 (FLVSLAAADILVATLIIPFSLANELL) threads the bilayer. At 81–90 (GYWYFWRAWC) the chain is on the extracellular side. Residues Cys90 and Cys169 are joined by a disulfide bond. A helical transmembrane segment spans residues 91–113 (EVYLALDVLFCTSSIVHLCAISL). Residues 114 to 135 (DRYWAVSRALEYNSKRTPRRIK) lie on the Cytoplasmic side of the membrane. A helical transmembrane segment spans residues 136–158 (CIILTVWLIAAVISLPPLIYKGD). Over 159–174 (QRPEPHGLPQCELNQE) the chain is Extracellular. The chain crosses the membrane as a helical span at residues 175-198 (AWYILASSIGSFFAPCLIMILVYL). The Cytoplasmic segment spans residues 199–375 (RIYVIAKRSH…LSREKRFTFV (177 aa)). The segment at 214 to 329 (AKRGSGEGES…ASPASVFNPP (116 aa)) is disordered. Over residues 303–314 (AEEDEEEVEECE) the composition is skewed to acidic residues. A helical transmembrane segment spans residues 376–399 (LAVVIGVFVVCWFPFFFSYSLGAI). The Extracellular segment spans residues 400 to 408 (CPQHCKVPH). A helical transmembrane segment spans residues 409–432 (GLFQFFFWIGYCNSSLNPVIYTIF). At 433-453 (NQDFRRAFRRILCRQWTQTGW) the chain is on the cytoplasmic side. A lipid anchor (S-palmitoyl cysteine) is attached at Cys445.

Belongs to the G-protein coupled receptor 1 family. Adrenergic receptor subfamily. ADRA2B sub-subfamily. Interacts with RAB26. Interacts with PPP1R9B. Interacts with GGA1, GGA2 and GGA3.

It localises to the cell membrane. In terms of biological role, alpha-2 adrenergic receptors mediate the catecholamine-induced inhibition of adenylate cyclase through the action of G proteins. The chain is Alpha-2B adrenergic receptor (Adra2b) from Mus musculus (Mouse).